The primary structure comprises 85 residues: Putative membrane protein insertion efficiency factor (85 aa).

It belongs to the UPF0161 family.

It is found in the cell inner membrane. Functionally, could be involved in insertion of integral membrane proteins into the membrane. The sequence is that of Putative membrane protein insertion efficiency factor from Vibrio cholerae serotype O1 (strain ATCC 39315 / El Tor Inaba N16961).